The chain runs to 41 residues: Inducible serine protease inhibitor 3 (41 aa).

Functionally, inhibits trypsin and the toxin proteases PR1 and PR2 of M.anisopliae. Does not inhibit chymotrypsin, subtilisin Carlsberg, proteinase K and porcine pancreatic elastase. The sequence is that of Inducible serine protease inhibitor 3 from Galleria mellonella (Greater wax moth).